Reading from the N-terminus, the 346-residue chain is Protein RecA (346 aa).

Residue 67–74 (GPESSGKT) participates in ATP binding.

This sequence belongs to the RecA family.

The protein resides in the cytoplasm. Its function is as follows. Can catalyze the hydrolysis of ATP in the presence of single-stranded DNA, the ATP-dependent uptake of single-stranded DNA by duplex DNA, and the ATP-dependent hybridization of homologous single-stranded DNAs. It interacts with LexA causing its activation and leading to its autocatalytic cleavage. This Mycobacteroides abscessus (strain ATCC 19977 / DSM 44196 / CCUG 20993 / CIP 104536 / JCM 13569 / NCTC 13031 / TMC 1543 / L948) (Mycobacterium abscessus) protein is Protein RecA.